The sequence spans 549 residues: Coiled-coil domain-containing protein 102A (549 aa).

3 disordered regions span residues 1–61 (MSHG…TAPA), 135–195 (LAGA…GSQE), and 207–248 (PEEP…EEDA). Ser12, Ser26, and Ser28 each carry phosphoserine. Pro residues predominate over residues 37 to 55 (SLPPTPPSGTPSPGPPPSL). Residues 69–160 (ESREELRLRE…ARGRELARLR (92 aa)) adopt a coiled-coil conformation. Basic and acidic residues-rich tracts occupy residues 135–158 (LAGARRERQEAQGECEARGRELAR) and 165–187 (AADKTHDGPEPEREQEPVRDIGA). 2 coiled-coil regions span residues 263–398 (KVLL…NASA) and 426–517 (KLKK…NAPL). 2 disordered regions span residues 472–496 (ELDEAHNQARKLQRSLDEQTEQSEN) and 509–549 (RRQQ…IQVA). Positions 530–549 (EAGDGASDLDEDEDLQIQVA) are enriched in acidic residues. Ser536 carries the post-translational modification Phosphoserine.

The polypeptide is Coiled-coil domain-containing protein 102A (Ccdc102a) (Mus musculus (Mouse)).